Reading from the N-terminus, the 258-residue chain is Glutamate racemase (258 aa).

Substrate contacts are provided by residues 11 to 12 and 43 to 44; these read DS and YG. Cysteine 74 (proton donor/acceptor) is an active-site residue. 75 to 76 contributes to the substrate binding site; sequence NT. Cysteine 187 acts as the Proton donor/acceptor in catalysis. 188-189 contributes to the substrate binding site; it reads TH.

It belongs to the aspartate/glutamate racemases family.

The catalysed reaction is L-glutamate = D-glutamate. It participates in cell wall biogenesis; peptidoglycan biosynthesis. Functionally, provides the (R)-glutamate required for cell wall biosynthesis. The polypeptide is Glutamate racemase (Bifidobacterium adolescentis (strain ATCC 15703 / DSM 20083 / NCTC 11814 / E194a)).